Reading from the N-terminus, the 741-residue chain is MMLSCSPLTVPSSSYPFHFLPSSSDPPYDSIRNHPSLSLLHNCKTLQSLRIIHAQMIKIGLHNTNYALSKLIEFCILSPHFEGLPYAISVFKTIQEPNLLIWNTMFRGHALSSDPVSALKLYVCMISLGLLPNSYTFPFVLKSCAKSKAFKEGQQIHGHVLKLGCDLDLYVHTSLISMYVQNGRLEDAHKVFDKSPHRDVVSYTALIKGYASRGYIENAQKLFDEIPVKDVVSWNAMISGYAETGNYKEALELFKDMMKTNVRPDESTMVTVVSACAQSGSIELGRQVHLWIDDHGFGSNLKIVNALIDLYSKCGELETACGLFERLPYKDVISWNTLIGGYTHMNLYKEALLLFQEMLRSGETPNDVTMLSILPACAHLGAIDIGRWIHVYIDKRLKGVTNASSLRTSLIDMYAKCGDIEAAHQVFNSILHKSLSSWNAMIFGFAMHGRADASFDLFSRMRKIGIQPDDITFVGLLSACSHSGMLDLGRHIFRTMTQDYKMTPKLEHYGCMIDLLGHSGLFKEAEEMINMMEMEPDGVIWCSLLKACKMHGNVELGESFAENLIKIEPENPGSYVLLSNIYASAGRWNEVAKTRALLNDKGMKKVPGCSSIEIDSVVHEFIIGDKFHPRNREIYGMLEEMEVLLEKAGFVPDTSEVLQEMEEEWKEGALRHHSEKLAIAFGLISTKPGTKLTIVKNLRVCRNCHEATKLISKIYKREIIARDRTRFHHFRDGVCSCNDYW.

PPR repeat units lie at residues 98-132 (NLLI…GLLP), 133-167 (NSYT…GCDL), 168-202 (DLYV…DVVS), 203-229 (YTAL…IPVK), 230-264 (DVVS…NVRP), 265-299 (DEST…GFGS), 300-330 (NLKI…LPYK), 331-365 (DVIS…GETP), 366-396 (NDVT…IDKR), 403-433 (ASSL…ILHK), 434-468 (SLSS…GIQP), 469-499 (DDIT…MTQD), and 505-535 (KLEH…MEME). The type E motif stretch occupies residues 540–615 (IWCSLLKACK…VPGCSSIEID (76 aa)). Positions 616-646 (SVVHEFIIGDKFHPRNREIYGMLEEMEVLLE) are type E(+) motif. Positions 647-741 (KAGFVPDTSE…DGVCSCNDYW (95 aa)) are type DYW motif.

It belongs to the PPR family. PCMP-H subfamily. In terms of assembly, interacts with ORRM1. Interacts with VAR3/OZ1.

It localises to the plastid. The protein resides in the chloroplast. Its function is as follows. Involved in multiple sites RNA editing events in chloroplasts. Involved in the editing of the site 9 of ndhB (ndhB-9) and site 1 of ndhG (ndhG-1) transcripts, which are two plastid-encoded subunits of the chloroplast NAD(P)H dehydrogenase (NDH) complex. Not essential for the activity of the NDH complex of the photosynthetic electron transport chain. The protein is Pentatricopeptide repeat-containing protein At1g08070, chloroplastic (PCMP-H12) of Arabidopsis thaliana (Mouse-ear cress).